The primary structure comprises 677 residues: MFSPRTEIENLRREINRHNQLYYVQDNPEISDSEYDALLRRLKELEEAHPELVTADSPTQRVGAEPLKAFGIVNHPYPLLSLANAFSDTELEAWYLRVKKLLGNAAFQIDCEPKMDGLAVALTYRNGKFTTGATRGDGFQGENITRNLRTIHSIPLNTEEDAPPVFEIRGEVYLPKEGFAKLNRERADKGLSLFANPRNAAAGSLRQLDPSVTAERPLDIFIYALGYAEDSLLPDSHWQILEYFSRLGFKINPRNRLVNTLEEAKEYYREMAENRDSLPYEADGVVFKVDSVSLQQKLGDAGREPRWAIAYKFPAEQVTTLLRKIGISVGRTGTLNPYAILEPVNVGGVVVKQASLHNEDDILRKDIREGDTVVIQRAGEVIPEVVAPVLAKRSPESKPFSMEETLFNPKLSRPACPVCGGEIYRPAGEAMHYCANVSCPAQFERQLEHFVSRGTMDIRGIGESLSVILAQEGLVKNVSDLYYLTAADLLKLPRMGEKSADNIIKAIADSKSRPLDRVIFGLGIRHVGNETAALLSSRYGDIWALAGAGLDELQTIPDIGAKIASSIKAYFSEEKNIAVIRRLETAGVKLASDQKPSYKPLPLSGVEFVVTGKLDSLSREEAQQKIRSLGGTAKDNVTKATRYLVVGADAGSKLAKARSMGVKELSEQEFINMLEQS.

Residues 32–36 (DSEYD), 81–82 (SL), and Glu-112 contribute to the NAD(+) site. Lys-114 (N6-AMP-lysine intermediate) is an active-site residue. NAD(+)-binding residues include Arg-135, Glu-171, Lys-288, and Lys-312. Positions 416, 419, 434, and 439 each coordinate Zn(2+). In terms of domain architecture, BRCT spans 598-677 (YKPLPLSGVE…QEFINMLEQS (80 aa)).

This sequence belongs to the NAD-dependent DNA ligase family. LigA subfamily. Requires Mg(2+) as cofactor. The cofactor is Mn(2+).

The catalysed reaction is NAD(+) + (deoxyribonucleotide)n-3'-hydroxyl + 5'-phospho-(deoxyribonucleotide)m = (deoxyribonucleotide)n+m + AMP + beta-nicotinamide D-nucleotide.. DNA ligase that catalyzes the formation of phosphodiester linkages between 5'-phosphoryl and 3'-hydroxyl groups in double-stranded DNA using NAD as a coenzyme and as the energy source for the reaction. It is essential for DNA replication and repair of damaged DNA. In Dehalococcoides mccartyi (strain ATCC BAA-2266 / KCTC 15142 / 195) (Dehalococcoides ethenogenes (strain 195)), this protein is DNA ligase.